The following is a 183-amino-acid chain: Ribosome rescue factor SmrB (183 aa).

The region spanning 98–173 (LDLHGLTQLQ…GDAALLVLIE (76 aa)) is the Smr domain.

The protein belongs to the SmrB family. In terms of assembly, associates with collided ribosomes, but not with correctly translating polysomes.

In terms of biological role, acts as a ribosome collision sensor. Detects stalled/collided disomes (pairs of ribosomes where the leading ribosome is stalled and a second ribosome has collided with it) and endonucleolytically cleaves mRNA at the 5' boundary of the stalled ribosome. Stalled/collided disomes form a new interface (primarily via the 30S subunits) that binds SmrB. Cleaved mRNA becomes available for tmRNA ligation, leading to ribosomal subunit dissociation and rescue of stalled ribosomes. In Escherichia coli O157:H7, this protein is Ribosome rescue factor SmrB.